The chain runs to 617 residues: Alkaline/neutral invertase E, chloroplastic (617 aa).

A chloroplast-targeting transit peptide spans 1 to 45; it reads MAASETVLRVPLGSVSQSCYLASFFVNSTPNLSFKPVSRNRKTVR. Serine 87 is subject to Phosphoserine.

The protein belongs to the glycosyl hydrolase 100 family. In terms of tissue distribution, expressed in roots, leaves and flowers.

Its subcellular location is the plastid. The protein localises to the chloroplast. The enzyme catalyses Hydrolysis of terminal non-reducing beta-D-fructofuranoside residues in beta-D-fructofuranosides.. Chloroplastic invertase that cleaves sucrose into glucose and fructose and is associated with the development of the photosynthetic apparatus and the assimilation of nitrogen in seedlings to control the sucrose to hexose ratio. Participates in the carbon flux between the cytosol and plastids in leaves. The sequence is that of Alkaline/neutral invertase E, chloroplastic from Arabidopsis thaliana (Mouse-ear cress).